A 96-amino-acid chain; its full sequence is Co-chaperonin GroES (96 aa).

It belongs to the GroES chaperonin family. Heptamer of 7 subunits arranged in a ring. Interacts with the chaperonin GroEL.

It is found in the cytoplasm. Its function is as follows. Together with the chaperonin GroEL, plays an essential role in assisting protein folding. The GroEL-GroES system forms a nano-cage that allows encapsulation of the non-native substrate proteins and provides a physical environment optimized to promote and accelerate protein folding. GroES binds to the apical surface of the GroEL ring, thereby capping the opening of the GroEL channel. The polypeptide is Co-chaperonin GroES (Shewanella frigidimarina (strain NCIMB 400)).